A 306-amino-acid polypeptide reads, in one-letter code: Tissue factor pathway inhibitor (306 aa).

The first 28 residues, 1-28 (MTYKMKKEYAFWATVCLLLSLVPEFLNA), serve as a signal peptide directing secretion. BPTI/Kunitz inhibitor domains follow at residues 50 to 100 (CAMK…KKTC), 121 to 171 (CFLE…KKIC), and 225 to 275 (CLQP…LRSC). 9 disulfide bridges follow: cysteine 50–cysteine 100, cysteine 59–cysteine 83, cysteine 75–cysteine 96, cysteine 121–cysteine 171, cysteine 130–cysteine 154, cysteine 146–cysteine 167, cysteine 225–cysteine 275, cysteine 234–cysteine 258, and cysteine 250–cysteine 271. Asparagine 141 is a glycosylation site (N-linked (GlcNAc...) asparagine). 3 N-linked (GlcNAc...) asparagine glycosylation sites follow: asparagine 254, asparagine 264, and asparagine 282.

In terms of tissue distribution, isoform alpha is expressed in heart and spleen; isoform beta in heart and lung.

It is found in the secreted. Functionally, inhibits factor X (X(a)) directly and, in a Xa-dependent way, inhibits VIIa/tissue factor activity, presumably by forming a quaternary Xa/LACI/VIIa/TF complex. It possesses an antithrombotic action and also the ability to associate with lipoproteins in plasma. The protein is Tissue factor pathway inhibitor (Tfpi) of Mus musculus (Mouse).